Reading from the N-terminus, the 309-residue chain is Aspartate carbamoyltransferase catalytic subunit (309 aa).

Arg-58 and Thr-59 together coordinate carbamoyl phosphate. Lys-87 contributes to the L-aspartate binding site. Carbamoyl phosphate is bound by residues Arg-108, His-136, and Gln-139. Positions 168 and 229 each coordinate L-aspartate. Leu-268 and Pro-269 together coordinate carbamoyl phosphate.

The protein belongs to the aspartate/ornithine carbamoyltransferase superfamily. ATCase family. Heterooligomer of catalytic and regulatory chains.

It catalyses the reaction carbamoyl phosphate + L-aspartate = N-carbamoyl-L-aspartate + phosphate + H(+). It functions in the pathway pyrimidine metabolism; UMP biosynthesis via de novo pathway; (S)-dihydroorotate from bicarbonate: step 2/3. Catalyzes the condensation of carbamoyl phosphate and aspartate to form carbamoyl aspartate and inorganic phosphate, the committed step in the de novo pyrimidine nucleotide biosynthesis pathway. The chain is Aspartate carbamoyltransferase catalytic subunit from Methanosarcina mazei (strain ATCC BAA-159 / DSM 3647 / Goe1 / Go1 / JCM 11833 / OCM 88) (Methanosarcina frisia).